A 109-amino-acid polypeptide reads, in one-letter code: Nucleoid-associated protein Swoo_1794 (109 aa).

The tract at residues 88-109 is disordered; that stretch reads QKDKMAEVTGGMQLPPGMKMPF.

The protein belongs to the YbaB/EbfC family. As to quaternary structure, homodimer.

It is found in the cytoplasm. It localises to the nucleoid. In terms of biological role, binds to DNA and alters its conformation. May be involved in regulation of gene expression, nucleoid organization and DNA protection. This is Nucleoid-associated protein Swoo_1794 from Shewanella woodyi (strain ATCC 51908 / MS32).